The following is a 775-amino-acid chain: Minichromosome maintenance protein 5 (775 aa).

Positions 1–22 (MSFDRPEIYSAPVLQGESPNDD) are disordered. The MCM domain maps to 366–573 (LYEILTNSIA…RDISIANHVI (208 aa)). An ATP-binding site is contributed by 416–423 (GDPGTAKS). The Arginine finger motif lies at 548-551 (SRFD).

The protein belongs to the MCM family. Component of the MCM2-7 complex. The complex forms a toroidal hexameric ring with the proposed subunit order MCM2-MCM6-MCM4-MCM7-MCM3-MCM5; loaded onto DNA, forms a head-head double hexamer. Interacts with CSM1.

The protein localises to the nucleus. It catalyses the reaction ATP + H2O = ADP + phosphate + H(+). Acts as a component of the MCM2-7 complex (MCM complex) which is the putative replicative helicase essential for 'once per cell cycle' DNA replication initiation and elongation in eukaryotic cells. The active ATPase sites in the MCM2-7 ring are formed through the interaction surfaces of two neighboring subunits such that a critical structure of a conserved arginine finger motif is provided in trans relative to the ATP-binding site of the Walker A box of the adjacent subunit. The six ATPase active sites, however, are likely to contribute differentially to the complex helicase activity; specifically the MCM2-MCM5 association is proposed to be reversible and to mediate a open ring conformation which may facilitate DNA loading. Once loaded onto DNA, double hexamers can slide on dsDNA in the absence of ATPase activity. The protein is Minichromosome maintenance protein 5 (MCM5) of Saccharomyces cerevisiae (strain ATCC 204508 / S288c) (Baker's yeast).